The following is a 378-amino-acid chain: MTDSPTLALAKDLISRQSVTPEDAGCQDLMIERLKALGFEIEVMVFEDTTNFWARRGTEAPLFAFAGHTDVVPAGPIEQWNTKPFEPTIIDGFLHGRGAADMKGSLASMVVAVEQFIAKHPDHTGSIGFLITSDEEGPFINGTVRVVEALMARGENIDMCIVGEPSSTEYVGDVVKNGRRGSITGDLTIKGTQGHVAYPHLANNPVHSSLLAINELATTEWDKGNDYFPPTSFQIPNVSAGTGASNVIPGEFNVQFNLRFSTELNNDIIVERITNTLDKYDFEYDLKWTFNGDPFLTDAGSLLDAIVDAVGHVNDVKPALLTTGGTSDGRFIARMKGQVVELGPVNATIHKVNECVKVADLEKLTDMYERTLVNLFAK.

Zn(2+) is bound at residue H68. Residue D70 is part of the active site. Position 101 (D101) interacts with Zn(2+). E135 serves as the catalytic Proton acceptor. Positions 136, 164, and 350 each coordinate Zn(2+).

The protein belongs to the peptidase M20A family. DapE subfamily. As to quaternary structure, homodimer. Requires Zn(2+) as cofactor. Co(2+) is required as a cofactor.

The catalysed reaction is N-succinyl-(2S,6S)-2,6-diaminopimelate + H2O = (2S,6S)-2,6-diaminopimelate + succinate. The protein operates within amino-acid biosynthesis; L-lysine biosynthesis via DAP pathway; LL-2,6-diaminopimelate from (S)-tetrahydrodipicolinate (succinylase route): step 3/3. Functionally, catalyzes the hydrolysis of N-succinyl-L,L-diaminopimelic acid (SDAP), forming succinate and LL-2,6-diaminopimelate (DAP), an intermediate involved in the bacterial biosynthesis of lysine and meso-diaminopimelic acid, an essential component of bacterial cell walls. The chain is Succinyl-diaminopimelate desuccinylase from Vibrio atlanticus (strain LGP32) (Vibrio splendidus (strain Mel32)).